The primary structure comprises 355 residues: tRNA uridine(34) hydroxylase (355 aa).

The Rhodanese domain maps to 146–240; it reads DDPDTVFVDM…YARQAKAQGL (95 aa). C200 (cysteine persulfide intermediate) is an active-site residue.

It belongs to the TrhO family.

The enzyme catalyses uridine(34) in tRNA + AH2 + O2 = 5-hydroxyuridine(34) in tRNA + A + H2O. Catalyzes oxygen-dependent 5-hydroxyuridine (ho5U) modification at position 34 in tRNAs. The protein is tRNA uridine(34) hydroxylase of Pectobacterium carotovorum subsp. carotovorum (strain PC1).